The sequence spans 238 residues: Protein FEV (238 aa).

The ETS DNA-binding region spans 47 to 127 (IQLWQFLLEL…HGKRYAYRFD (81 aa)). Residues 129–238 (QGLAQACQPP…AASHLGGHYH (110 aa)) form a may mediate active transcriptional repression region.

Belongs to the ETS family. In terms of tissue distribution, in brain, exclusively expressed in the major serotonergic neurons of the dorsal and median raphe nuclei located in the midbrain and pons. Also detected in prostate and small intestine.

Its subcellular location is the nucleus. In terms of biological role, functions as a transcriptional regulator. According to PubMed:12761502, it functions as a transcriptional repressor. Functions in the differentiation and the maintenance of the central serotonergic neurons. May play a role in cell growth. The sequence is that of Protein FEV (FEV) from Homo sapiens (Human).